The following is a 76-amino-acid chain: Small ribosomal subunit protein bS16 (76 aa).

Belongs to the bacterial ribosomal protein bS16 family.

This Helicobacter pylori (strain HPAG1) protein is Small ribosomal subunit protein bS16.